The chain runs to 115 residues: Tyrosine-protein phosphatase 23 (115 aa).

Residues 1 to 115 (WMMIVEQKCR…EIGGDAPMVV (115 aa)) enclose the Tyrosine-protein phosphatase domain. Aspartate 83 contacts substrate.

Belongs to the protein-tyrosine phosphatase family.

It carries out the reaction O-phospho-L-tyrosyl-[protein] + H2O = L-tyrosyl-[protein] + phosphate. This chain is Tyrosine-protein phosphatase 23 (STY-23), found in Styela plicata (Wrinkled sea squirt).